The primary structure comprises 438 residues: Xylose isomerase (438 aa).

Positions 306 and 308 each coordinate Mg(2+).

Belongs to the xylose isomerase family. In terms of assembly, homotetramer. Mg(2+) is required as a cofactor.

Its subcellular location is the cytoplasm. It carries out the reaction alpha-D-xylose = alpha-D-xylulofuranose. The sequence is that of Xylose isomerase from Pseudomonas fluorescens (strain SBW25).